Reading from the N-terminus, the 121-residue chain is NADH-quinone oxidoreductase subunit A 1 (121 aa).

Transmembrane regions (helical) follow at residues 6-26, 62-82, and 90-110; these read FPIF…LSIG, LVAM…PWAV, and FYGL…YYYI.

It belongs to the complex I subunit 3 family. As to quaternary structure, NDH-1 is composed of 14 different subunits. Subunits NuoA, H, J, K, L, M, N constitute the membrane sector of the complex.

The protein resides in the cell inner membrane. The catalysed reaction is a quinone + NADH + 5 H(+)(in) = a quinol + NAD(+) + 4 H(+)(out). Its function is as follows. NDH-1 shuttles electrons from NADH, via FMN and iron-sulfur (Fe-S) centers, to quinones in the respiratory chain. The immediate electron acceptor for the enzyme in this species is believed to be a menaquinone. Couples the redox reaction to proton translocation (for every two electrons transferred, four hydrogen ions are translocated across the cytoplasmic membrane), and thus conserves the redox energy in a proton gradient. The polypeptide is NADH-quinone oxidoreductase subunit A 1 (Chloroherpeton thalassium (strain ATCC 35110 / GB-78)).